The sequence spans 85 residues: Probable Sec-independent protein translocase protein TatE (85 aa).

Residues 1–21 (MEGLSITKLLVVGILIVLLFG) traverse the membrane as a helical segment. The interval 64–85 (KTVAETKAASDSQAAASVERKD) is disordered.

Belongs to the TatA/E family. TatE subfamily.

The protein resides in the cell inner membrane. Part of the twin-arginine translocation (Tat) system that transports large folded proteins containing a characteristic twin-arginine motif in their signal peptide across membranes. TatE shares overlapping functions with TatA. This chain is Probable Sec-independent protein translocase protein TatE, found in Yersinia pestis.